The following is a 622-amino-acid chain: 1-deoxy-D-xylulose-5-phosphate synthase (622 aa).

Thiamine diphosphate is bound by residues His80 and 121 to 123 (GHS). Asp152 contributes to the Mg(2+) binding site. Residues 153 to 154 (GA), Asn181, Tyr288, and Glu369 contribute to the thiamine diphosphate site. Residue Asn181 participates in Mg(2+) binding.

Belongs to the transketolase family. DXPS subfamily. As to quaternary structure, homodimer. The cofactor is Mg(2+). It depends on thiamine diphosphate as a cofactor.

It catalyses the reaction D-glyceraldehyde 3-phosphate + pyruvate + H(+) = 1-deoxy-D-xylulose 5-phosphate + CO2. The protein operates within metabolic intermediate biosynthesis; 1-deoxy-D-xylulose 5-phosphate biosynthesis; 1-deoxy-D-xylulose 5-phosphate from D-glyceraldehyde 3-phosphate and pyruvate: step 1/1. In terms of biological role, catalyzes the acyloin condensation reaction between C atoms 2 and 3 of pyruvate and glyceraldehyde 3-phosphate to yield 1-deoxy-D-xylulose-5-phosphate (DXP). This chain is 1-deoxy-D-xylulose-5-phosphate synthase, found in Psychromonas ingrahamii (strain DSM 17664 / CCUG 51855 / 37).